The chain runs to 342 residues: MTVATPNLTTVPVPPSDSRERVKQFMQTLQDEICAGLEALDGGGQFREDSWERPEGGGGRSRVIREGNVFEQGGVNFSEVWGEKLPPSILAQYPEAAGHGYFATGTSMVLHPRNPYIPTVHLNYRYFEAGPVWWFGGGADLTPYYPFAEDAKHFHSSFKAACDRHYPQFYDVFKLWCDEYFFLKHRGETRGIGGIFFDYQDGRGDLYNKGPAPSGPAGQKAAEVGIVSDLNWEKLFAFAQDCGRTFLPAYSPIVERRKDTPWGDRERQFQLYRRGRYVEFNLVYDRGTIFGLQTNGRTESILMSLPPLVRWEYMYQPEAGSREQELYDVFLKPQDWVNWPTA.

S107 provides a ligand contact to substrate. Residues H111 and H121 each contribute to the a divalent metal cation site. Residue H121 is the Proton donor of the active site. Residue 123 to 125 (NYR) coordinates substrate. A divalent metal cation contacts are provided by H155 and H185. The tract at residues 277–312 (YVEFNLVYDRGTIFGLQTNGRTESILMSLPPLVRWE) is important for dimerization.

Belongs to the aerobic coproporphyrinogen-III oxidase family. As to quaternary structure, homodimer. A divalent metal cation serves as cofactor.

It localises to the cytoplasm. It catalyses the reaction coproporphyrinogen III + O2 + 2 H(+) = protoporphyrinogen IX + 2 CO2 + 2 H2O. Its pathway is porphyrin-containing compound metabolism; protoporphyrin-IX biosynthesis; protoporphyrinogen-IX from coproporphyrinogen-III (O2 route): step 1/1. Involved in the heme and chlorophyll biosynthesis. Catalyzes the aerobic oxidative decarboxylation of propionate groups of rings A and B of coproporphyrinogen-III to yield the vinyl groups in protoporphyrinogen-IX. This chain is Oxygen-dependent coproporphyrinogen-III oxidase, found in Synechococcus sp. (strain ATCC 27144 / PCC 6301 / SAUG 1402/1) (Anacystis nidulans).